Here is a 389-residue protein sequence, read N- to C-terminus: Chalcone synthase 2 (389 aa).

C164 is an active-site residue.

This sequence belongs to the thiolase-like superfamily. Chalcone/stilbene synthases family.

It catalyses the reaction (E)-4-coumaroyl-CoA + 3 malonyl-CoA + 3 H(+) = 2',4,4',6'-tetrahydroxychalcone + 3 CO2 + 4 CoA. Its pathway is secondary metabolite biosynthesis; flavonoid biosynthesis. In terms of biological role, the primary product of this enzyme is 4,2',4',6'-tetrahydroxychalcone (also termed naringenin-chalcone or chalcone) which can under specific conditions spontaneously isomerize into naringenin. This Pisum sativum (Garden pea) protein is Chalcone synthase 2 (CHS2).